The sequence spans 238 residues: NADH-quinone oxidoreductase subunit C (238 aa).

Residues 1–20 (MSSPDQNPSDAAGQTGSSNE) form a disordered region.

This sequence belongs to the complex I 30 kDa subunit family. As to quaternary structure, NDH-1 is composed of 14 different subunits. Subunits NuoB, C, D, E, F, and G constitute the peripheral sector of the complex.

It is found in the cell membrane. It carries out the reaction a quinone + NADH + 5 H(+)(in) = a quinol + NAD(+) + 4 H(+)(out). NDH-1 shuttles electrons from NADH, via FMN and iron-sulfur (Fe-S) centers, to quinones in the respiratory chain. The immediate electron acceptor for the enzyme in this species is believed to be a menaquinone. Couples the redox reaction to proton translocation (for every two electrons transferred, four hydrogen ions are translocated across the cytoplasmic membrane), and thus conserves the redox energy in a proton gradient. The protein is NADH-quinone oxidoreductase subunit C of Mycobacterium marinum (strain ATCC BAA-535 / M).